A 566-amino-acid chain; its full sequence is APC/C activator protein CDH1 (566 aa).

The span at 1-18 (MSTNLNPFMNNTPSSSPL) shows a compositional bias: polar residues. Residues 1 to 56 (MSTNLNPFMNNTPSSSPLKGSESKRVSKRPISSSSSASLLSSPSRRSRPSTVYGDR) form a disordered region. Low complexity predominate over residues 29–44 (RPISSSSSASLLSSPS). The C-box motif lies at 55 to 61 (DRYIPSR). Position 213 is a phosphoserine (Ser213). 7 WD repeats span residues 258–298 (PSLA…VVHL), 300–339 (DTENEYTSLSWIGAGSHLAVGQANGLVEIYDVMKRKCIRT), 342–379 (GHIDRVACLSWNNHVLTSGSRDHRILHRDVRMPDPFFE), 383–422 (SHTQEVCGLKWNVADNKLASGGNDNVVHVYEGTSKSPILT), 425–467 (EHKA…KMSD), 469–510 (DSGS…PIAI), and 513–552 (GHSFRVLHLTLSNDGTTVVSGAGDETLRYWKLFDKPKAKV).

This sequence belongs to the WD repeat CDC20/Fizzy family. As to quaternary structure, associates with the APC/C complex. Interacts with CLB2, CLB3, CDC5, HSL1, MSN5 and PSE1. In terms of processing, phosphorylated at multiple sites by CDC28, probably in its CLB5 bound form, in S, G2 and M phase of the cell cycle, thereby blocking the association of CDH1 to the APC/C and promoting nuclear export of CDH1 by MSN5. Dephosphorylated and activated by CDC14 in late anaphase, which may be necessary for PSE1-dependent nuclear localization.

The protein localises to the cytoplasm. It is found in the nucleus. Activator protein that regulates the ubiquitin ligase activity and substrate specificity of the anaphase promoting complex/cyclosome (APC/C). During telophase and in the subsequent G1 phase of the cell cycle, recognizes and binds proteins containing a destruction box (D-box) and an additional degradation signal termed the KEN box including ASE1, CDC20, the B-type cyclins CLB2 and CLB3, the polo-like kinase CDC5 and HSL1, and recruits them in a C-box-dependent manner to the APC/C for ubiquitination and subsequent proteolysis. Required for exit from mitosis, cytokinesis and formation of prereplicative complexes in G1. Probably is the target of a BUB2-dependent spindle checkpoint pathway. The polypeptide is APC/C activator protein CDH1 (CDH1) (Saccharomyces cerevisiae (strain ATCC 204508 / S288c) (Baker's yeast)).